The primary structure comprises 247 residues: Mannose-P-dolichol utilization defect 1 protein (247 aa).

A2 is subject to N-acetylalanine. Transmembrane regions (helical) follow at residues C37–V57, L74–I94, F100–V120, V128–L145, L151–L171, L185–V205, and M213–F233. The 67-residue stretch at K39–E105 folds into the PQ-loop 1 domain. A PQ-loop 2 domain is found at A159 to V216.

It belongs to the MPDU1 (TC 2.A.43.3) family.

It localises to the membrane. Required for normal utilization of mannose-dolichol phosphate (Dol-P-Man) in the synthesis of N-linked and O-linked oligosaccharides and GPI anchors. The polypeptide is Mannose-P-dolichol utilization defect 1 protein (Mpdu1) (Mus musculus (Mouse)).